The sequence spans 121 residues: Large ribosomal subunit protein uL18 (121 aa).

The protein belongs to the universal ribosomal protein uL18 family. As to quaternary structure, part of the 50S ribosomal subunit; part of the 5S rRNA/L5/L18/L25 subcomplex. Contacts the 5S and 23S rRNAs.

This is one of the proteins that bind and probably mediate the attachment of the 5S RNA into the large ribosomal subunit, where it forms part of the central protuberance. The protein is Large ribosomal subunit protein uL18 of Pelobacter propionicus (strain DSM 2379 / NBRC 103807 / OttBd1).